Here is a 453-residue protein sequence, read N- to C-terminus: Ribosomal protein uS12 methylthiotransferase RimO (453 aa).

The 116-residue stretch at 3-118 (KKVGIISLGC…IAKVIEEFYS (116 aa)) folds into the MTTase N-terminal domain. Residues cysteine 12, cysteine 48, cysteine 81, cysteine 162, cysteine 166, and cysteine 169 each contribute to the [4Fe-4S] cluster site. The Radical SAM core domain occupies 148-378 (STNSGYAYLK…MQLQKEIVQR (231 aa)). The TRAM domain occupies 381–449 (ESRLEKVYKT…DYDLIGEVIN (69 aa)).

It belongs to the methylthiotransferase family. RimO subfamily. [4Fe-4S] cluster is required as a cofactor.

The protein localises to the cytoplasm. The enzyme catalyses L-aspartate(89)-[ribosomal protein uS12]-hydrogen + (sulfur carrier)-SH + AH2 + 2 S-adenosyl-L-methionine = 3-methylsulfanyl-L-aspartate(89)-[ribosomal protein uS12]-hydrogen + (sulfur carrier)-H + 5'-deoxyadenosine + L-methionine + A + S-adenosyl-L-homocysteine + 2 H(+). Its function is as follows. Catalyzes the methylthiolation of an aspartic acid residue of ribosomal protein uS12. In Acetivibrio thermocellus (strain ATCC 27405 / DSM 1237 / JCM 9322 / NBRC 103400 / NCIMB 10682 / NRRL B-4536 / VPI 7372) (Clostridium thermocellum), this protein is Ribosomal protein uS12 methylthiotransferase RimO.